The chain runs to 389 residues: MEKAIRNFLSQESAGGILLLVAVALAMLMANSPLAGLYQGFLGTEVQVRVGALDLHKPLLLWINDGLMALFFLLIGLEVKRELLEGALSSVAQASLPTFAAIGGMLVPAGIYLLFNYGDPVTQAGWAIPAATDIAFALGIMALLGSRVPVALKVFLLALAIIDDLGVIVIIALFYSTDLSTISLIIASIAIVGLVALNRKGVTALAPYGVLGLVLWVAVLKSGVHATLAGVIIAFCIPLRAKDGSSPSEHLEHSLHPWSTFLILPVFAFANAGVALGNMSLNTLISPVPVGIALGLMLGKPIGVMLFSYAAVKLRLAQLPNGIGWKQIAPVAAMCGIGFTMSMFIASLAFEQADPMYGDLARLGTLIGSILAALIGYFWLSKVLPKQGV.

The next 11 helical transmembrane spans lie at 17-37 (ILLL…LAGL), 59-79 (LLLW…GLEV), 95-115 (SLPT…YLLF), 124-144 (AGWA…MALL), 154-174 (VFLL…IALF), 177-197 (TDLS…LVAL), 213-233 (LVLW…GVII), 261-281 (FLIL…NMSL), 287-307 (PVPV…VMLF), 328-348 (IAPV…IASL), and 363-383 (LGTL…LSKV).

Belongs to the NhaA Na(+)/H(+) (TC 2.A.33) antiporter family.

The protein localises to the cell inner membrane. The catalysed reaction is Na(+)(in) + 2 H(+)(out) = Na(+)(out) + 2 H(+)(in). Na(+)/H(+) antiporter that extrudes sodium in exchange for external protons. This is Na(+)/H(+) antiporter NhaA from Shewanella sp. (strain MR-4).